The sequence spans 298 residues: Bifunctional protein FolD (298 aa).

Residues G166–S168, S191, and I232 contribute to the NADP(+) site.

The protein belongs to the tetrahydrofolate dehydrogenase/cyclohydrolase family. As to quaternary structure, homodimer.

The enzyme catalyses (6R)-5,10-methylene-5,6,7,8-tetrahydrofolate + NADP(+) = (6R)-5,10-methenyltetrahydrofolate + NADPH. The catalysed reaction is (6R)-5,10-methenyltetrahydrofolate + H2O = (6R)-10-formyltetrahydrofolate + H(+). Its pathway is one-carbon metabolism; tetrahydrofolate interconversion. Functionally, catalyzes the oxidation of 5,10-methylenetetrahydrofolate to 5,10-methenyltetrahydrofolate and then the hydrolysis of 5,10-methenyltetrahydrofolate to 10-formyltetrahydrofolate. In Erythrobacter litoralis (strain HTCC2594), this protein is Bifunctional protein FolD.